A 469-amino-acid polypeptide reads, in one-letter code: Ufm1-specific protease 2 (469 aa).

M1 is subject to N-acetylmethionine. Residues C302, D426, and H428 contribute to the active site.

This sequence belongs to the peptidase C78 family. In terms of tissue distribution, expressed in brain.

Its subcellular location is the endoplasmic reticulum. The protein resides in the cytoplasm. The protein localises to the nucleus. In terms of biological role, thiol-dependent isopeptidase that specifically cleaves UFM1, a ubiquitin-like modifier protein, from conjugated proteins, such as CD274/PD-L1, CYB5R3, DDRGK1, MRE11, RPL26/uL24, TRIP4 and RPL26/uL24. While it is also able to mediate the processing of UFM1 precursors, a prerequisite for conjugation reactions, UFSP2 mainly acts as a protein deUFMylase that mediates deconjugation of UFM1 from target proteins. Mediates deUFMylation of RPL26/uL24, a critical step to release the UFM1 ribosome E3 ligase (UREL) complex during the recycling of 60S ribosome subunits from the endoplasmic reticulum. Catalyzes deUFMylation of TRIP4, regulating intracellular nuclear receptors transactivation and thereby regulate cell proliferation and differentiation. In Homo sapiens (Human), this protein is Ufm1-specific protease 2.